Here is a 192-residue protein sequence, read N- to C-terminus: uncharacterized protein (192 aa).

The 132-residue stretch at glutamine 29–serine 160 folds into the Nudix hydrolase domain. The Nudix box motif lies at glycine 67–alanine 89. Residues glutamate 83 and glutamate 87 each coordinate Mg(2+).

Belongs to the Nudix hydrolase family. PCD1 subfamily. Mn(2+) is required as a cofactor. It depends on Mg(2+) as a cofactor.

Probably mediates the hydrolysis of some nucleoside diphosphate derivatives. This is an uncharacterized protein from Salmonella choleraesuis (strain SC-B67).